Reading from the N-terminus, the 65-residue chain is VESP-VB1 (65 aa).

A signal peptide spans 1-23; it reads MKMSILFLFALIASLACLQLTFA. AXPX repeat units lie at residues 23 to 26, 27 to 30, 31 to 34, 35 to 38, 39 to 42, 43 to 46, and 47 to 50; these read AAPA, ASPL, ANPG, ASPE, AAPL, ADPL, and ADPF. Residues 24 to 49 constitute a propeptide that is removed on maturation; sequence APAASPLANPGASPEAAPLADPLADP. L62 carries the leucine amide modification.

Expressed by the venom gland.

It is found in the secreted. Functionally, antimicrobial peptide. Shows activity against both Gram-positive (S.aureus MIC=1.0-3.75 ug/ml) and -negative (E.coli MIC=7.5-15 ug/ml) bacteria, as well against fungi (C.albicans MIC=30 ug/ml). Also promotes important mast cell degranulation. Shows little hemolytic activity on rabbit and human erythrocytes. Its mast cell degranulation activity may be related to the activation of G-protein coupled receptors in mast cells as well as interaction with other proteins located in cell endosomal membranes in the mast cells. This chain is VESP-VB1, found in Vespa bicolor (Black shield wasp).